The chain runs to 72 residues: Translation initiation factor IF-1 (72 aa).

Positions 1-72 (MSKDDVIEVE…TRGRIIYRHK (72 aa)) constitute an S1-like domain.

Belongs to the IF-1 family. In terms of assembly, component of the 30S ribosomal translation pre-initiation complex which assembles on the 30S ribosome in the order IF-2 and IF-3, IF-1 and N-formylmethionyl-tRNA(fMet); mRNA recruitment can occur at any time during PIC assembly.

Its subcellular location is the cytoplasm. Functionally, one of the essential components for the initiation of protein synthesis. Stabilizes the binding of IF-2 and IF-3 on the 30S subunit to which N-formylmethionyl-tRNA(fMet) subsequently binds. Helps modulate mRNA selection, yielding the 30S pre-initiation complex (PIC). Upon addition of the 50S ribosomal subunit IF-1, IF-2 and IF-3 are released leaving the mature 70S translation initiation complex. The sequence is that of Translation initiation factor IF-1 from Carboxydothermus hydrogenoformans (strain ATCC BAA-161 / DSM 6008 / Z-2901).